The chain runs to 199 residues: MTQALKDLGEYIAQALPQDVLGTEVNRCGELSLTVKAASIVKVMTYLKDDAGCLFKQLVDVCGVDWPGREQRFDVVYHLLSMKHNQRVRVKVATDEETAVPSVTGVFSSAGWFEREVWDMYGVLFSDHPDLRRILTDYGFEGHPLRKDFPLTGYVEMRYDDETKRVVYEPVKLTQDFRSFDFLSPWEGPGMLPGDEKAN.

This sequence belongs to the complex I 30 kDa subunit family. As to quaternary structure, NDH-1 is composed of 14 different subunits. Subunits NuoB, C, D, E, F, and G constitute the peripheral sector of the complex.

Its subcellular location is the cell inner membrane. It catalyses the reaction a quinone + NADH + 5 H(+)(in) = a quinol + NAD(+) + 4 H(+)(out). Functionally, NDH-1 shuttles electrons from NADH, via FMN and iron-sulfur (Fe-S) centers, to quinones in the respiratory chain. The immediate electron acceptor for the enzyme in this species is believed to be ubiquinone. Couples the redox reaction to proton translocation (for every two electrons transferred, four hydrogen ions are translocated across the cytoplasmic membrane), and thus conserves the redox energy in a proton gradient. The chain is NADH-quinone oxidoreductase subunit C from Paramagnetospirillum magneticum (strain ATCC 700264 / AMB-1) (Magnetospirillum magneticum).